The primary structure comprises 443 residues: MPYIPHTPAEIREMLDAVGAPDVDALFAEIPAALRPQSFDLAKGATEMAVRAAMEKLSAKNRTDLTSFLGGGFYDHYVPAASDLLLSRGEFYTAYTPYQPEASQGTLQAIFEYQTAVCRLMDMECSNAGVYDGGTALYEALMMAVRHTRRKKAVVSETVSPIYRIVLATYTKNLHLDLVVVPHKNGLDDFEALTAAVDGDTAAIVVQNPNFFGSVQDFTALFDHAREKGAVSVISCYPVLQTVLKTPGAMGADIATAEGQSLGLPLSFGGPYLGIMTCKKSLVRQMPGRIAGRTKDAAGRTGYVLTLQAREQHIRRQKATSNICSNQALCALRALINLCLTGNEGLSRQAARSIENANYAAWKLGAIPGVKLLNEAPFGNEFAAVFPVNAKQVARMLMDGGIVPGFPLGRYYQGLENALLICCTEKHDRADIDRLARRLENAL.

It belongs to the GcvP family. N-terminal subunit subfamily. In terms of assembly, the glycine cleavage system is composed of four proteins: P, T, L and H. In this organism, the P 'protein' is a heterodimer of two subunits.

It carries out the reaction N(6)-[(R)-lipoyl]-L-lysyl-[glycine-cleavage complex H protein] + glycine + H(+) = N(6)-[(R)-S(8)-aminomethyldihydrolipoyl]-L-lysyl-[glycine-cleavage complex H protein] + CO2. Its function is as follows. The glycine cleavage system catalyzes the degradation of glycine. The P protein binds the alpha-amino group of glycine through its pyridoxal phosphate cofactor; CO(2) is released and the remaining methylamine moiety is then transferred to the lipoamide cofactor of the H protein. In Solidesulfovibrio magneticus (strain ATCC 700980 / DSM 13731 / RS-1) (Desulfovibrio magneticus), this protein is Probable glycine dehydrogenase (decarboxylating) subunit 1.